The sequence spans 375 residues: Succinyl-diaminopimelate desuccinylase (375 aa).

His66 is a Zn(2+) binding site. Asp68 is an active-site residue. Asp99 contributes to the Zn(2+) binding site. Glu133 acts as the Proton acceptor in catalysis. Residues Glu134, Glu162, and His348 each contribute to the Zn(2+) site.

It belongs to the peptidase M20A family. DapE subfamily. As to quaternary structure, homodimer. Requires Zn(2+) as cofactor. Co(2+) is required as a cofactor.

The enzyme catalyses N-succinyl-(2S,6S)-2,6-diaminopimelate + H2O = (2S,6S)-2,6-diaminopimelate + succinate. Its pathway is amino-acid biosynthesis; L-lysine biosynthesis via DAP pathway; LL-2,6-diaminopimelate from (S)-tetrahydrodipicolinate (succinylase route): step 3/3. Functionally, catalyzes the hydrolysis of N-succinyl-L,L-diaminopimelic acid (SDAP), forming succinate and LL-2,6-diaminopimelate (DAP), an intermediate involved in the bacterial biosynthesis of lysine and meso-diaminopimelic acid, an essential component of bacterial cell walls. The polypeptide is Succinyl-diaminopimelate desuccinylase (Yersinia enterocolitica serotype O:8 / biotype 1B (strain NCTC 13174 / 8081)).